Consider the following 298-residue polypeptide: Mitochondrial 2-oxodicarboxylate carrier (298 aa).

Solcar repeat units follow at residues 10–99 (HETS…YKKF), 106–195 (SPGL…VKNI), and 204–293 (LEFL…TYAW). 6 helical membrane-spanning segments follow: residues 16 to 36 (VAAGGSAGLVEICLMHPLDVV), 69 to 88 (FGFYKGIIPPILAETPKRAV), 112 to 132 (LIAGLGSGLTEAVVVNPFEVV), 166 to 186 (GLNKGLTATLGRHGIFNMVYF), 204 to 224 (LEFLRKFGIGFVSGTMGSVFN), and 276 to 296 (LGPGGGVMLLVYEYTYAWLQE).

Belongs to the mitochondrial carrier (TC 2.A.29) family.

The protein resides in the mitochondrion inner membrane. It carries out the reaction 2-oxoadipate(in) + 2-oxoglutarate(out) = 2-oxoadipate(out) + 2-oxoglutarate(in). The catalysed reaction is hexanedioate(in) + 2-oxoglutarate(out) = hexanedioate(out) + 2-oxoglutarate(in). It catalyses the reaction L-2-aminoadipate(in) + 2-oxoglutarate(out) = L-2-aminoadipate(out) + 2-oxoglutarate(in). The enzyme catalyses glutarate(in) + 2-oxoglutarate(out) = glutarate(out) + 2-oxoglutarate(in). It carries out the reaction 2-oxoheptanedioate(in) + 2-oxoglutarate(out) = 2-oxoheptanedioate(out) + 2-oxoglutarate(in). The catalysed reaction is heptanedioate(in) + 2-oxoglutarate(out) = heptanedioate(out) + 2-oxoglutarate(in). It catalyses the reaction citrate(in) + 2-oxoglutarate(out) = citrate(out) + 2-oxoglutarate(in). Its function is as follows. Transports dicarboxylates across the inner membranes of mitochondria by a counter-exchange mechanism. Can transport 2-oxoadipate (2-oxohexanedioate), 2-oxoglutarate, adipate (hexanedioate), glutarate, and to a lesser extent, pimelate (heptanedioate), 2-oxopimelate (2-oxoheptanedioate), 2-aminoadipate (2-aminohexanedioate), oxaloacetate, and citrate. Plays a central role in catabolism of lysine, hydroxylysine, and tryptophan, by transporting common metabolite intermediates (such as 2-oxoadipate) into the mitochondria, where it is converted into acetyl-CoA and can enter the citric acid (TCA) cycle. This is Mitochondrial 2-oxodicarboxylate carrier (Slc25a21) from Mus musculus (Mouse).